The following is a 285-amino-acid chain: MTNKVQILSVTALGNLDAYIRIANLWPMLSIKEEKLLTKRLRYHDDLDAAKTLILSHLRFVIHISRNYSGYGLLQADLIQEGNIGLMKAVRRFNPDIGVRLVSFAVHWIKSEIHEYVLRNWRIVKVATTKSQRKLFFNLRKNKKRLGWFNQEEIEIVARELGVSSEDVREMESRMSAQDITFNPFPEEDLKDGKINGNMFYLQDKTSNFANGLEQDNWNKHTTSKLSNALLRLDERSRNIIRARWLDKKEKNTLQKIANNYGISAERVRQLEKNAMKKLKIAIEN.

The segment at 53–122 (LILSHLRFVI…IHEYVLRNWR (70 aa)) is sigma-70 factor domain-2. The Interaction with polymerase core subunit RpoC motif lies at 77 to 80 (DLIQ). The interval 229–281 (ALLRLDERSRNIIRARWLDKKEKNTLQKIANNYGISAERVRQLEKNAMKKLKI) is sigma-70 factor domain-4. A DNA-binding region (H-T-H motif) is located at residues 254–273 (LQKIANNYGISAERVRQLEK).

This sequence belongs to the sigma-70 factor family. RpoH subfamily. Interacts with the RNA polymerase core enzyme.

It is found in the cytoplasm. Sigma factors are initiation factors that promote the attachment of RNA polymerase to specific initiation sites and are then released. This sigma factor is involved in regulation of expression of heat shock genes. The protein is RNA polymerase sigma factor RpoH of Buchnera aphidicola subsp. Schizaphis graminum (strain Sg).